Reading from the N-terminus, the 204-residue chain is Transcriptional regulator GfcR (204 aa).

Belongs to the purine/pyrimidine phosphoribosyltransferase family. GfcR subfamily.

The polypeptide is Transcriptional regulator GfcR (Methanosarcina mazei (strain ATCC BAA-159 / DSM 3647 / Goe1 / Go1 / JCM 11833 / OCM 88) (Methanosarcina frisia)).